Reading from the N-terminus, the 95-residue chain is MRTIFLLTLLTLAALCLSDLTDAKPSGPESDKAFMSKQEGNKVVNRLRRYLGASVPSPDPLEPTREQCELNPACDELSDQYGLKTAYKRIYGITI.

Positions 1-23 (MRTIFLLTLLTLAALCLSDLTDA) are cleaved as a signal peptide. Positions 24–49 (KPSGPESDKAFMSKQEGNKVVNRLRR) are excised as a propeptide. The region spanning 46 to 92 (RLRRYLGASVPSPDPLEPTREQCELNPACDELSDQYGLKTAYKRIYG) is the Gla domain. Glu62, Glu66, Glu69, and Asp75 together coordinate Ca(2+). 4-carboxyglutamate occurs at positions 62, 66, and 69. Cys68 and Cys74 are joined by a disulfide.

The protein belongs to the osteocalcin/matrix Gla protein family. In terms of processing, gamma-carboxyglutamate residues are formed by vitamin K dependent carboxylation by GGCX. These residues are essential for the binding of calcium. Carboxylated in a Ptprv/Esp-dependent process. Decarboxylation promotes the hormone activity. In terms of tissue distribution, bone.

It localises to the secreted. Its function is as follows. The carboxylated form is one of the main organic components of the bone matrix, which constitutes 1-2% of the total bone protein: it acts as a negative regulator of bone formation and is required to limit bone formation without impairing bone resorption or mineralization. The carboxylated form binds strongly to apatite and calcium. In terms of biological role, the uncarboxylated form acts as a hormone secreted by osteoblasts, which regulates different cellular processes, such as energy metabolism, male fertility and brain development. Regulates of energy metabolism by acting as a hormone favoring pancreatic beta-cell proliferation, insulin secretion and sensitivity and energy expenditure. Uncarboxylated osteocalcin hormone also promotes testosterone production in the testes: acts as a ligand for G protein-coupled receptor GPRC6A at the surface of Leydig cells, initiating a signaling response that promotes the expression of enzymes required for testosterone synthesis in a CREB-dependent manner. Also acts as a regulator of brain development: osteocalcin hormone crosses the blood-brain barrier and acts as a ligand for GPR158 on neurons, initiating a signaling response that prevents neuronal apoptosis in the hippocampus, favors the synthesis of all monoamine neurotransmitters and inhibits that of gamma-aminobutyric acid (GABA). Osteocalcin also crosses the placenta during pregnancy and maternal osteocalcin is required for fetal brain development. This chain is Osteocalcin, found in Mus musculus (Mouse).